The chain runs to 447 residues: Diaminopimelate decarboxylase (447 aa).

The residue at position 72 (K72) is an N6-(pyridoxal phosphate)lysine. Residues G258 and 300–303 (EPGR) each bind pyridoxal 5'-phosphate. Substrate contacts are provided by R303, R344, and Y348. Residue C375 is the Proton donor of the active site. Substrate-binding residues include E376 and Y405. Pyridoxal 5'-phosphate is bound at residue Y405.

This sequence belongs to the Orn/Lys/Arg decarboxylase class-II family. LysA subfamily. Homodimer. The cofactor is pyridoxal 5'-phosphate.

It catalyses the reaction meso-2,6-diaminopimelate + H(+) = L-lysine + CO2. It functions in the pathway amino-acid biosynthesis; L-lysine biosynthesis via DAP pathway; L-lysine from DL-2,6-diaminopimelate: step 1/1. Its function is as follows. Specifically catalyzes the decarboxylation of meso-diaminopimelate (meso-DAP) to L-lysine. The polypeptide is Diaminopimelate decarboxylase (Mycobacterium bovis (strain ATCC BAA-935 / AF2122/97)).